The following is an 87-amino-acid chain: MSNPTVLDQIRHIIAQALDKPVETIHAEQSFRRDLGADSLDSVEIVMAIEDQFAVEFDEDSTAAVDTVQDLVTYIEAALASRGAQTA.

In terms of domain architecture, Carrier spans 1–79; sequence MSNPTVLDQI…DLVTYIEAAL (79 aa). An O-(pantetheine 4'-phosphoryl)serine modification is found at S39.

This sequence belongs to the acyl carrier protein (ACP) family. In terms of processing, 4'-phosphopantetheine is transferred from CoA to a specific serine of apo-ACP by AcpS. This modification is essential for activity because fatty acids are bound in thioester linkage to the sulfhydryl of the prosthetic group.

The protein resides in the cytoplasm. It participates in lipid metabolism; fatty acid biosynthesis. Carrier of the growing fatty acid chain in fatty acid biosynthesis. This is Acyl carrier protein 3 from Ralstonia nicotianae (strain ATCC BAA-1114 / GMI1000) (Ralstonia solanacearum).